The primary structure comprises 462 residues: MKLSFSLPSKSKPKVTATTADGNNAVDDGTSKEFVTEFDPSKTLANSIPKYVIPPIENTWRPHKKMKNLDLPLQSGNAGSGLEFEPEVPLPGTEKPDNISYGLNLRQKVKDDSIGGDAVEERKVSMGEQLMLQSLRRDLMSLADDPTLEDFESVPVDGFGAALMAGYGWKPGKGIGKNAKEDVEIKEYKKWTAKEGLGFDPDRSKVVDVKAKVKESVKLDKKGVGINGGDVFFVGKEVRIIAGRDVGLKGKIVEKPGSDFFVIKISGSEEEVKVGVNEVADLGSKEEEKCLKKLKDLQLNDREKDKKTSGRGRGAERGSRSEVRASEKQDRGQTRERKVKPSWLRSHIKVRIVSKDWKGGRLYLKKGKVVDVVGPTTCDITMDETQELVQGVDQELLETALPRRGGPVLVLSGKHKGVYGNLVEKDLDKETGVVRDLDNHKMLDVRLDQVAEYMGDMDDIEY.

Over residues 1-10 (MKLSFSLPSK) the composition is skewed to low complexity. Residues 1–32 (MKLSFSLPSKSKPKVTATTADGNNAVDDGTSK) are disordered. One can recognise a G-patch domain in the interval 156–202 (VDGFGAALMAGYGWKPGKGIGKNAKEDVEIKEYKKWTAKEGLGFDPD). Residues 231–258 (VFFVGKEVRIIAGRDVGLKGKIVEKPGS) form the KOW 1 domain. Residues 301-336 (DREKDKKTSGRGRGAERGSRSEVRASEKQDRGQTRE) are compositionally biased toward basic and acidic residues. Positions 301-340 (DREKDKKTSGRGRGAERGSRSEVRASEKQDRGQTRERKVK) are disordered. Positions 401–428 (LPRRGGPVLVLSGKHKGVYGNLVEKDLD) constitute a KOW 2 domain.

Belongs to the MOS2 family.

Its subcellular location is the nucleus. Its function is as follows. Required for innate and induced resistance to pathogens such as compatible and incompatible isolates of P.syringae and P.parasitica. The sequence is that of Protein MOS2 (MOS2) from Arabidopsis thaliana (Mouse-ear cress).